A 201-amino-acid chain; its full sequence is Two-component response regulator ORR9 (201 aa).

Positions 10 to 142 constitute a Response regulatory domain; that stretch reads HVLAVDDSLP…DMSKLKPHIL (133 aa). Aspartate 75 carries the post-translational modification 4-aspartylphosphate. The interval 149–201 is disordered; that stretch reads HYQQEQNLQSNSESNNSSNPTSENSSSSTSSNSHKRKAVDEEILPHTIRPRHS. Positions 158-180 are enriched in low complexity; it reads SNSESNNSSNPTSENSSSSTSSN.

Belongs to the ARR family. Type-A subfamily. Post-translationally, two-component system major event consists of a His-to-Asp phosphorelay between a sensor histidine kinase (HK) and a response regulator (RR). In plants, the His-to-Asp phosphorelay involves an additional intermediate named Histidine-containing phosphotransfer protein (HPt). This multistep phosphorelay consists of a His-Asp-His-Asp sequential transfer of a phosphate group between first a His and an Asp of the HK protein, followed by the transfer to a conserved His of the HPt protein and finally the transfer to an Asp in the receiver domain of the RR protein.

Its function is as follows. Functions as a response regulator involved in His-to-Asp phosphorelay signal transduction system. Phosphorylation of the Asp residue in the receiver domain activates the ability of the protein to promote the transcription of target genes. Type-A response regulators seem to act as negative regulators of the cytokinin signaling. In Oryza sativa subsp. japonica (Rice), this protein is Two-component response regulator ORR9.